Consider the following 469-residue polypeptide: Aspartyl/glutamyl-tRNA(Asn/Gln) amidotransferase subunit B (469 aa).

This sequence belongs to the GatB/GatE family. GatB subfamily. Heterotrimer of A, B and C subunits.

The enzyme catalyses L-glutamyl-tRNA(Gln) + L-glutamine + ATP + H2O = L-glutaminyl-tRNA(Gln) + L-glutamate + ADP + phosphate + H(+). It catalyses the reaction L-aspartyl-tRNA(Asn) + L-glutamine + ATP + H2O = L-asparaginyl-tRNA(Asn) + L-glutamate + ADP + phosphate + 2 H(+). Functionally, allows the formation of correctly charged Asn-tRNA(Asn) or Gln-tRNA(Gln) through the transamidation of misacylated Asp-tRNA(Asn) or Glu-tRNA(Gln) in organisms which lack either or both of asparaginyl-tRNA or glutaminyl-tRNA synthetases. The reaction takes place in the presence of glutamine and ATP through an activated phospho-Asp-tRNA(Asn) or phospho-Glu-tRNA(Gln). The polypeptide is Aspartyl/glutamyl-tRNA(Asn/Gln) amidotransferase subunit B (Methanococcus maripaludis (strain C7 / ATCC BAA-1331)).